A 288-amino-acid polypeptide reads, in one-letter code: Quinate/shikimate dehydrogenase (288 aa).

Residues K71 and D107 each contribute to the substrate site. Residues 132–135 (AGGA), 155–158 (NRRD), K205, 232–235 (CVYN), and G255 each bind NAD(+).

Belongs to the shikimate dehydrogenase family. Homodimer.

The catalysed reaction is L-quinate + NAD(+) = 3-dehydroquinate + NADH + H(+). It catalyses the reaction L-quinate + NADP(+) = 3-dehydroquinate + NADPH + H(+). It carries out the reaction shikimate + NADP(+) = 3-dehydroshikimate + NADPH + H(+). The enzyme catalyses shikimate + NAD(+) = 3-dehydroshikimate + NADH + H(+). It participates in metabolic intermediate biosynthesis; chorismate biosynthesis; chorismate from D-erythrose 4-phosphate and phosphoenolpyruvate: step 4/7. Functionally, the actual biological function of YdiB remains unclear, nor is it known whether 3-dehydroshikimate or quinate represents the natural substrate. Catalyzes the reversible NAD-dependent reduction of both 3-dehydroshikimate (DHSA) and 3-dehydroquinate to yield shikimate (SA) and quinate, respectively. It can use both NAD or NADP for catalysis, however it has higher catalytic efficiency with NAD. The polypeptide is Quinate/shikimate dehydrogenase (Shigella flexneri).